The following is a 238-amino-acid chain: Formate dehydrogenase, cytochrome b556 subunit (238 aa).

Heme b contacts are provided by His-23 and His-62. Transmembrane regions (helical) follow at residues 23 to 43, 60 to 80, 120 to 140, and 155 to 175; these read HWML…FFFP, AIHP…ALLY, MLFW…IIMW, and IAIL…LVHI. The heme b site is built by His-160 and His-174.

It belongs to the formate dehydrogenase gamma subunit family. Formate dehydrogenase is a membrane-bound complex, formed by subunits alpha, beta and gamma. Requires heme as cofactor.

It is found in the cell membrane. In terms of biological role, allows to use formate as major electron donor during anaerobic respiration. Subunit gamma is probably the cytochrome b556(FDO) component of the formate dehydrogenase. The polypeptide is Formate dehydrogenase, cytochrome b556 subunit (fdxI) (Haemophilus influenzae (strain ATCC 51907 / DSM 11121 / KW20 / Rd)).